A 309-amino-acid chain; its full sequence is Probable manganese-dependent inorganic pyrophosphatase (309 aa).

The Mn(2+) site is built by His-9, Asp-13, Asp-15, Asp-75, His-97, and Asp-149.

Belongs to the PPase class C family. Requires Mn(2+) as cofactor.

The protein localises to the cytoplasm. The catalysed reaction is diphosphate + H2O = 2 phosphate + H(+). The polypeptide is Probable manganese-dependent inorganic pyrophosphatase (Bacillus cereus (strain 03BB102)).